The primary structure comprises 902 residues: HTH-type transcriptional regulator MalT (902 aa).

39–46 contributes to the ATP binding site; the sequence is SPAGYGKT. The region spanning 832 to 897 is the HTH luxR-type domain; the sequence is ELVRTSPLTQ…EAVQTAEQLL (66 aa). The segment at residues 856 to 875 is a DNA-binding region (H-T-H motif); the sequence is NEQIAHELDVAGTTIKTHIR.

The protein belongs to the MalT family. In terms of assembly, monomer in solution. Oligomerizes to an active state in the presence of the positive effectors ATP and maltotriose.

Activated by ATP and maltotriose, which are both required for DNA binding. In terms of biological role, positively regulates the transcription of the maltose regulon whose gene products are responsible for uptake and catabolism of malto-oligosaccharides. Specifically binds to the promoter region of its target genes, recognizing a short DNA motif called the MalT box. This is HTH-type transcriptional regulator MalT from Vibrio cholerae serotype O1 (strain ATCC 39315 / El Tor Inaba N16961).